The sequence spans 498 residues: ATP synthase subunit beta, chloroplastic (498 aa).

172–179 (GGAGVGKT) lines the ATP pocket.

The protein belongs to the ATPase alpha/beta chains family. F-type ATPases have 2 components, CF(1) - the catalytic core - and CF(0) - the membrane proton channel. CF(1) has five subunits: alpha(3), beta(3), gamma(1), delta(1), epsilon(1). CF(0) has four main subunits: a(1), b(1), b'(1) and c(9-12).

It is found in the plastid. The protein resides in the chloroplast thylakoid membrane. The enzyme catalyses ATP + H2O + 4 H(+)(in) = ADP + phosphate + 5 H(+)(out). Functionally, produces ATP from ADP in the presence of a proton gradient across the membrane. The catalytic sites are hosted primarily by the beta subunits. This chain is ATP synthase subunit beta, chloroplastic, found in Lemna minor (Common duckweed).